The sequence spans 477 residues: Oxidative stress-induced growth inhibitor 1 (477 aa).

S12 is subject to Phosphoserine.

Belongs to the OKL38 family. It depends on NADPH as a cofactor. In terms of tissue distribution, ubiquitous. Highest expression in the ovary, testis, kidney, skeletal muscle and liver.

The protein localises to the midbody. Functionally, monooxygenase catalytic activity. Involved in regulation of cytokinesis; promotes RHOA activity, probably acting locally at the midbody in late cytokinesis. Monooxygenase activity is involved in stabilizing transient structures between daughter cells, termed intercellular bridges, before abscission. Regulates differentiation and proliferation through the regulation of cell death. The protein is Oxidative stress-induced growth inhibitor 1 of Homo sapiens (Human).